The primary structure comprises 393 residues: S-adenosylmethionine synthase 1 (393 aa).

Residue E9 participates in Mg(2+) binding. H15 contributes to the ATP binding site. Position 43 (E43) interacts with K(+). Residues E56 and Q99 each coordinate L-methionine. ATP is bound by residues 167 to 169 (DGK), 235 to 238 (SGRF), D246, 252 to 253 (RK), A269, K273, and K277. D246 contributes to the L-methionine binding site. K277 provides a ligand contact to L-methionine.

It belongs to the AdoMet synthase family. In terms of assembly, homotetramer. It depends on Mn(2+) as a cofactor. The cofactor is Mg(2+). Requires Co(2+) as cofactor. K(+) is required as a cofactor.

The protein resides in the cytoplasm. The catalysed reaction is L-methionine + ATP + H2O = S-adenosyl-L-methionine + phosphate + diphosphate. Its pathway is amino-acid biosynthesis; S-adenosyl-L-methionine biosynthesis; S-adenosyl-L-methionine from L-methionine: step 1/1. Its function is as follows. Catalyzes the formation of S-adenosylmethionine from methionine and ATP. The reaction comprises two steps that are both catalyzed by the same enzyme: formation of S-adenosylmethionine (AdoMet) and triphosphate, and subsequent hydrolysis of the triphosphate. This is S-adenosylmethionine synthase 1 (SAMS1) from Brassica juncea (Indian mustard).